The following is a 577-amino-acid chain: Proline--tRNA ligase (577 aa).

It belongs to the class-II aminoacyl-tRNA synthetase family. ProS type 1 subfamily. As to quaternary structure, homodimer.

The protein localises to the cytoplasm. The catalysed reaction is tRNA(Pro) + L-proline + ATP = L-prolyl-tRNA(Pro) + AMP + diphosphate. Functionally, catalyzes the attachment of proline to tRNA(Pro) in a two-step reaction: proline is first activated by ATP to form Pro-AMP and then transferred to the acceptor end of tRNA(Pro). As ProRS can inadvertently accommodate and process non-cognate amino acids such as alanine and cysteine, to avoid such errors it has two additional distinct editing activities against alanine. One activity is designated as 'pretransfer' editing and involves the tRNA(Pro)-independent hydrolysis of activated Ala-AMP. The other activity is designated 'posttransfer' editing and involves deacylation of mischarged Ala-tRNA(Pro). The misacylated Cys-tRNA(Pro) is not edited by ProRS. In Helicobacter pylori (strain P12), this protein is Proline--tRNA ligase.